The following is a 329-amino-acid chain: UPF0421 protein SH1063 (329 aa).

Transmembrane regions (helical) follow at residues 25–45 (LFCLMLDLTPIFAILTAIVTI), 60–80 (LPATVIGALFAVLFTFIFGDP), 87–107 (FSALFTILVCTKLNLQVGTTV), 108–128 (AVLTSVAMIPGIHDAYLFNFF), and 131–151 (LLTALIGLVTAGLVNFIVLPP).

It belongs to the UPF0421 family.

The protein localises to the cell membrane. This chain is UPF0421 protein SH1063, found in Staphylococcus haemolyticus (strain JCSC1435).